The sequence spans 304 residues: Probable 5-dehydro-4-deoxyglucarate dehydratase (304 aa).

The protein belongs to the DapA family.

The catalysed reaction is 5-dehydro-4-deoxy-D-glucarate + H(+) = 2,5-dioxopentanoate + CO2 + H2O. It functions in the pathway carbohydrate acid metabolism; D-glucarate degradation; 2,5-dioxopentanoate from D-glucarate: step 2/2. This Arthrobacter sp. (strain FB24) protein is Probable 5-dehydro-4-deoxyglucarate dehydratase.